A 441-amino-acid chain; its full sequence is MDIASKVEGFPTLGILYYTSTLLAVCTYAALIIISIPKTGPASLVRYSSPAIVLTVGKQLFHASYGVSGSLAHRSLTLALTALFILQCCNFLVLTRLDAKDLAKKNIFQDSDHMIYKAYRVVCLIFNVRGIGTPWQAKHLCGFPRFYQRGKGRGPTPIWFILRQSLIVAWQCLLLDIIYTTSMSTPKEDTLKLFGEGTEYMYLDANAEQWTGRFIAGIIAWVIPGRVSIDLPHRVLSIISVFLGFSSPQQWPPLFGSMLDAYTIRGFWSTFWHSYCRWTLTTISSFICRDFLRLPRPSIVERYLNIAFVFLGSAVVHMAIDSFCWGPPMKTKLPTLAFFGSLVVGIIIEDTIQALCRRITGEKRRDGDDGVPVWHKLVGYIWVSFWFMMTSPWYLYHNSRLPPDDTWLVPVSFVDTFGLDTATMLLFGSGVILKFAIGIEV.

Transmembrane regions (helical) follow at residues 14-34, 75-95, 158-178, 306-326, 336-356, 377-397, and 421-441; these read GILY…LIII, SLTL…LVLT, IWFI…LDII, IAFV…FCWG, LAFF…QALC, LVGY…YLYH, and TATM…GIEV.

Belongs to the wax synthase family.

The protein resides in the membrane. Its pathway is sesquiterpene biosynthesis; trichothecene biosynthesis. In terms of biological role, acetyltransferase; part of the core gene cluster that mediates the biosynthesis of trichothecenes, a very large family of chemically related bicyclic sesquiterpene compounds acting as mycotoxins, including T2-toxin. The biosynthesis of trichothecenes begins with the cyclization of farnesyl diphosphate to trichodiene and is catalyzed by the trichodiene synthase TRI5. Trichodiene undergoes a series of oxygenations catalyzed by the cytochrome P450 monooxygenase TRI4. TRI4 controls the addition of four oxygens at C-2, C-3, C-11, and the C-12, C-13-epoxide to form the intermediate isotrichotriol. Isotrichotriol then undergoes a non-enzymatic isomerization and cyclization to form isotrichodermol. During this process, the oxygen at the C-2 position becomes the pyran ring oxygen and the hydroxyl group at C-11 is lost. More complex type A trichothecenes are built by modifying isotrichodermol through a series of paired hydroxylation and acetylation or acylation steps. Isotrichodermol is converted to isotrichodermin by the acetyltransferase TRI101. TRI101 encodes a C-3 transacetylase that acts as a self-protection or resistance factor during biosynthesis and that the presence of a free C-3 hydroxyl group is a key component of Fusarium trichothecene phytotoxicity. A second hydroxyl group is added to C-15 by the trichothecene C-15 hydroxylase TRI11, producing 15-decalonectrin, which is then acetylated by TRI3, producing calonectrin. A third hydroxyl group is added at C-4 by the cytochrome P450 monooxygenase TRI13, converting calonectrin to 3,15-diacetoxyspirpenol, which is subsequently acetylated by the acetyltransferase TRI7. A fourth hydroxyl group is added to C-8 by the cytochrome P450 monooxygenase TRI1, followed by the addition of an isovaleryl moiety by TRI16. Finally, the acetyl group is removed from the C-3 position by the trichothecene C-3 esterase TRI8 to produce T-2 toxin. The polypeptide is Acetyltransferase TRI7 (Fusarium sporotrichioides).